We begin with the raw amino-acid sequence, 156 residues long: Putative pre-16S rRNA nuclease (156 aa).

It belongs to the YqgF nuclease family.

It is found in the cytoplasm. Functionally, could be a nuclease involved in processing of the 5'-end of pre-16S rRNA. The protein is Putative pre-16S rRNA nuclease of Gloeobacter violaceus (strain ATCC 29082 / PCC 7421).